A 109-amino-acid chain; its full sequence is Nucleoid-associated protein HI_0442 (109 aa).

It belongs to the YbaB/EbfC family. As to quaternary structure, homodimer.

Its subcellular location is the cytoplasm. It localises to the nucleoid. Functionally, binds to DNA and alters its conformation. May be involved in regulation of gene expression, nucleoid organization and DNA protection. The chain is Nucleoid-associated protein HI_0442 from Haemophilus influenzae (strain ATCC 51907 / DSM 11121 / KW20 / Rd).